Consider the following 262-residue polypeptide: tRNA pseudouridine synthase A (262 aa).

Aspartate 52 functions as the Nucleophile in the catalytic mechanism. Tyrosine 110 lines the substrate pocket.

Belongs to the tRNA pseudouridine synthase TruA family. As to quaternary structure, homodimer.

It catalyses the reaction uridine(38/39/40) in tRNA = pseudouridine(38/39/40) in tRNA. Its function is as follows. Formation of pseudouridine at positions 38, 39 and 40 in the anticodon stem and loop of transfer RNAs. This Hydrogenovibrio crunogenus (strain DSM 25203 / XCL-2) (Thiomicrospira crunogena) protein is tRNA pseudouridine synthase A.